A 541-amino-acid chain; its full sequence is Arginine--tRNA ligase (541 aa).

The short motif at 119-129 is the 'HIGH' region element; sequence ANPTGPLHIGH.

The protein belongs to the class-I aminoacyl-tRNA synthetase family. In terms of assembly, monomer.

The protein resides in the cytoplasm. The catalysed reaction is tRNA(Arg) + L-arginine + ATP = L-arginyl-tRNA(Arg) + AMP + diphosphate. The protein is Arginine--tRNA ligase (argS) of Helicobacter pylori (strain J99 / ATCC 700824) (Campylobacter pylori J99).